The following is a 524-amino-acid chain: uncharacterized protein (524 aa).

Residues 83-101 (NSTPSKQAKPLQRNSPYQG) show a composition bias toward polar residues. Disordered regions lie at residues 83–108 (NSTPSKQAKPLQRNSPYQGNSQSENQ) and 155–179 (PPCNIETNEDDSGNNEYNNNKKRPR).

The protein resides in the cytoplasm. This is an uncharacterized protein from Saccharomyces cerevisiae (strain ATCC 204508 / S288c) (Baker's yeast).